Reading from the N-terminus, the 425-residue chain is Metalloprotease AF_0655 (425 aa).

It belongs to the peptidase U62 family.

Functionally, probable metalloprotease. This chain is Metalloprotease AF_0655, found in Archaeoglobus fulgidus (strain ATCC 49558 / DSM 4304 / JCM 9628 / NBRC 100126 / VC-16).